The sequence spans 75 residues: Beta-defensin 42 (75 aa).

Positions 1-21 (MNLRLSCLLFILVTSLPAGRC) are cleaved as a signal peptide. Intrachain disulfides connect Cys33–Cys60, Cys40–Cys54, and Cys44–Cys61.

Belongs to the beta-defensin family. In terms of tissue distribution, epididymis-specific, with highest levels in the initial segment and distal caput.

It is found in the secreted. Functionally, has bactericidal activity. May play a role in the antimicrobial protection of sperm and urogenital tract epithelia. The polypeptide is Beta-defensin 42 (Mus musculus (Mouse)).